We begin with the raw amino-acid sequence, 304 residues long: Ribonuclease Z (304 aa).

Zn(2+)-binding residues include H63, H65, D67, H68, H143, D213, and H271. The Proton acceptor role is filled by D67.

Belongs to the RNase Z family. Homodimer. Zn(2+) serves as cofactor.

It catalyses the reaction Endonucleolytic cleavage of RNA, removing extra 3' nucleotides from tRNA precursor, generating 3' termini of tRNAs. A 3'-hydroxy group is left at the tRNA terminus and a 5'-phosphoryl group is left at the trailer molecule.. Functionally, zinc phosphodiesterase, which displays some tRNA 3'-processing endonuclease activity. Probably involved in tRNA maturation, by removing a 3'-trailer from precursor tRNA. The sequence is that of Ribonuclease Z from Porphyromonas gingivalis (strain ATCC BAA-308 / W83).